The primary structure comprises 1019 residues: Insulin-degrading enzyme (1019 aa).

His108 lines the Zn(2+) pocket. Glu111 functions as the Proton acceptor in the catalytic mechanism. His112 and Glu189 together coordinate Zn(2+). At Lys192 the chain carries N6-succinyllysine. 359–363 lines the substrate pocket; that stretch reads LVGGQ. Arg429 is a binding site for ATP. Lys697 carries the post-translational modification N6-succinyllysine. A SlyX motif motif is present at residues 853 to 858; that stretch reads EKPPHY. Position 895-901 (895-901) interacts with ATP; it reads DKPKKLS.

This sequence belongs to the peptidase M16 family. Homodimer. Can also form homotetramers. The cofactor is Zn(2+). In terms of tissue distribution, detected in brain and liver (at protein level). Detected in liver.

It is found in the cytoplasm. It localises to the cytosol. The protein localises to the cell membrane. Its subcellular location is the secreted. The catalysed reaction is Degradation of insulin, glucagon and other polypeptides. No action on proteins.. Activated by ATP, other nucleotide triphosphates and small peptides. Inhibited by bacitracin. Functionally, plays a role in the cellular breakdown of insulin, APP peptides, IAPP peptides, natriuretic peptides, glucagon, bradykinin, kallidin, and other peptides, and thereby plays a role in intercellular peptide signaling. Substrate binding induces important conformation changes, making it possible to bind and degrade larger substrates, such as insulin. Contributes to the regulation of peptide hormone signaling cascades and regulation of blood glucose homeostasis via its role in the degradation of insulin, glucagon and IAPP. Plays a role in the degradation and clearance of APP-derived amyloidogenic peptides that are secreted by neurons and microglia. Degrades the natriuretic peptides ANP, BNP and CNP, inactivating their ability to raise intracellular cGMP. Also degrades an aberrant frameshifted 40-residue form of NPPA (fsNPPA) which is associated with familial atrial fibrillation in heterozygous patients. Involved in antigen processing. Produces both the N terminus and the C terminus of MAGEA3-derived antigenic peptide (EVDPIGHLY) that is presented to cytotoxic T lymphocytes by MHC class I. In Mus musculus (Mouse), this protein is Insulin-degrading enzyme (Ide).